A 203-amino-acid chain; its full sequence is Proteasome subunit beta 2 (203 aa).

A propeptide spans 1–10 (MNLQNKILKG) (removed in mature form; by autocatalysis). The Nucleophile role is filled by threonine 11.

This sequence belongs to the peptidase T1B family. As to quaternary structure, the 20S proteasome core is composed of 14 alpha and 14 beta subunits that assemble into four stacked heptameric rings, resulting in a barrel-shaped structure. The two inner rings, each composed of seven catalytic beta subunits, are sandwiched by two outer rings, each composed of seven alpha subunits. The catalytic chamber with the active sites is on the inside of the barrel. Has a gated structure, the ends of the cylinder being occluded by the N-termini of the alpha-subunits. Is capped at one or both ends by the proteasome regulatory ATPase, PAN.

The protein localises to the cytoplasm. It catalyses the reaction Cleavage of peptide bonds with very broad specificity.. With respect to regulation, the formation of the proteasomal ATPase PAN-20S proteasome complex, via the docking of the C-termini of PAN into the intersubunit pockets in the alpha-rings, triggers opening of the gate for substrate entry. Interconversion between the open-gate and close-gate conformations leads to a dynamic regulation of the 20S proteasome proteolysis activity. Its function is as follows. Component of the proteasome core, a large protease complex with broad specificity involved in protein degradation. The chain is Proteasome subunit beta 2 from Sulfolobus acidocaldarius (strain ATCC 33909 / DSM 639 / JCM 8929 / NBRC 15157 / NCIMB 11770).